Reading from the N-terminus, the 189-residue chain is Hypoxanthine/guanine phosphoribosyltransferase (189 aa).

It belongs to the purine/pyrimidine phosphoribosyltransferase family. Archaeal HPRT subfamily. Homodimer.

It localises to the cytoplasm. It catalyses the reaction IMP + diphosphate = hypoxanthine + 5-phospho-alpha-D-ribose 1-diphosphate. The catalysed reaction is GMP + diphosphate = guanine + 5-phospho-alpha-D-ribose 1-diphosphate. It participates in purine metabolism; IMP biosynthesis via salvage pathway; IMP from hypoxanthine: step 1/1. Functionally, catalyzes a salvage reaction resulting in the formation of IMP that is energically less costly than de novo synthesis. This chain is Hypoxanthine/guanine phosphoribosyltransferase, found in Methanothrix soehngenii (strain ATCC 5969 / DSM 3671 / JCM 10134 / NBRC 103675 / OCM 69 / GP-6) (Methanosaeta concilii).